Here is a 104-residue protein sequence, read N- to C-terminus: MSSGQSSSSSGKAGPQEPPSSAAEPAYRSPGLRGVRTTSLFRAVNPELFIRPNKPVMALGLLALSVCVGYLGYLHAIRDSDQQLYEAVDSDGETYMRRRTSRWD.

Residues 1–11 (MSSGQSSSSSG) show a composition bias toward low complexity. Positions 1 to 31 (MSSGQSSSSSGKAGPQEPPSSAAEPAYRSPG) are disordered. Residues 55 to 77 (PVMALGLLALSVCVGYLGYLHAI) form a helical membrane-spanning segment.

The protein belongs to the SMIM8 family.

It localises to the membrane. The chain is Small integral membrane protein 8 (smim8) from Danio rerio (Zebrafish).